The sequence spans 320 residues: Putative FBD-associated F-box protein At3g60710 (320 aa).

One can recognise an F-box domain in the interval 2 to 48 (EDLISQLPNELLQEILLNLPTSESVRTSVLPTRWRNLWQSVPGLYLI). Residues 212-268 (MEEIASSPVPKCLQTSIENVKIKMTPKADQEKSRKAETEVANYILENATLLKLTLWL) form the FBD domain.

The protein is Putative FBD-associated F-box protein At3g60710 of Arabidopsis thaliana (Mouse-ear cress).